Here is a 327-residue protein sequence, read N- to C-terminus: Phenylalanine--tRNA ligase alpha subunit (327 aa).

E252 contributes to the Mg(2+) binding site.

It belongs to the class-II aminoacyl-tRNA synthetase family. Phe-tRNA synthetase alpha subunit type 1 subfamily. In terms of assembly, tetramer of two alpha and two beta subunits. Requires Mg(2+) as cofactor.

The protein resides in the cytoplasm. It catalyses the reaction tRNA(Phe) + L-phenylalanine + ATP = L-phenylalanyl-tRNA(Phe) + AMP + diphosphate + H(+). This Pectobacterium carotovorum subsp. carotovorum (strain PC1) protein is Phenylalanine--tRNA ligase alpha subunit.